The sequence spans 501 residues: MWRPSDSTVYVPPPNPVSKVVATDAYVKRTNIFYHASSSRLLAVGHPYYSIKKVNKTVVPKVSGYQYRVFKVVLPDPNKFALPDSSLFDPTTQRLVWACTGLEVGRGQPLGVGVSGHPLLNKYDDVENSGGYGGNPGQDNRVNVGMDYKQTQLCMVGCAPPLGEHWGKGTQCSNTSVQNGDCPPLELITSVIQDGDMVDTGFGAMNFADLQTNKSDVPLDICGTVCKYPDYLQMAADPYGDRLFFYLRKEQMFARHFFNRAGTVGEPVPDDLLVKGGNNRSSVASSIYVHTPSGSLVSSEAQLFNKPYWLQKAQGHNNGICWGNHLFVTVVDTTRSTNMTLCASVSKSATYTNSDYKEYMRHVEEFDLQFIFQLCSITLSAEVMAYIHTMNPSVLEDWNFGLSPPPNGTLEDTYRYVQSQAITCQKPTPEKEKQDPYKDMSFWEVNLKEKFSSELDQFPLGRKFLLQSGYRGRTSARTGIKRPAVSKPSTAPKRKRTKTKK.

The interval 472–501 (GRTSARTGIKRPAVSKPSTAPKRKRTKTKK) is disordered. A compositionally biased stretch (basic residues) spans 492–501 (PKRKRTKTKK).

The protein belongs to the papillomaviridae L1 protein family. Self-assembles into homopentamers. The capsid has an icosahedral symmetry and consists of 72 capsomers, with each capsomer being a pentamer of L1. Interacts with the minor capsid protein L2; this interaction is necessary for viral genome encapsidation. Interacts with protein E2; this interaction enhances E2-dependent replication and transcription activation.

It is found in the virion. It localises to the host nucleus. Forms an icosahedral capsid with a T=7 symmetry and a 50 nm diameter. The capsid is composed of 72 pentamers linked to each other by disulfide bonds and associated with L2 proteins. Binds to heparan sulfate proteoglycans on cell surface of basal layer keratinocytes to provide initial virion attachment. This binding mediates a conformational change in the virus capsid that facilitates efficient infection. The virion enters the host cell via endocytosis. During virus trafficking, L1 protein dissociates from the viral DNA and the genomic DNA is released to the host nucleus. The virion assembly takes place within the cell nucleus. Encapsulates the genomic DNA together with protein L2. This chain is Major capsid protein L1, found in Homo sapiens (Human).